A 974-amino-acid chain; its full sequence is Kinesin-like protein KIN-7A (974 aa).

The interval Met-1–Glu-29 is disordered. The Kinesin motor domain maps to Lys-31 to Val-353. Gly-117–Thr-124 contributes to the ATP binding site. Coiled-coil stretches lie at residues Val-362–Asn-435 and Ser-565–Leu-603. Disordered stretches follow at residues Ser-605 to Pro-649 and Asn-663 to Asn-713. Residues Thr-616–Leu-628 show a composition bias toward basic residues. Polar residues-rich tracts occupy residues Asn-638–Pro-649 and Pro-666–Gly-682. The segment covering Ser-683–Glu-693 has biased composition (basic and acidic residues).

This sequence belongs to the TRAFAC class myosin-kinesin ATPase superfamily. Kinesin family. KIN-7 subfamily. Post-translationally, phosphorylated at Thr-145, Thr-687 and Thr-703 by CDKAs and CDKBs. Phosphorylated NACK1 fails to mediate cytokinesis. As to expression, expressed in roots, flowers, pollen mother cells and embryos.

It is found in the cytoplasm. The protein resides in the cytoskeleton. The protein localises to the phragmoplast. Its function is as follows. Probable plus end-directed motor protein that functions in the NACK-PQR (ANP1-MKK6-MPK4) MAP kinase signaling pathway, which is essential for somatic cell cytokinesis, especially for the cell-plate formation and its expansion. Regulates the activity and the localization of ANP1, probably by association through the non-catalytic region of the kinase. Functionally redundant with NACK2 and essential to promote the progression of cytokinesis and for cellularization (formation of the cell plate) during microgametogenesis and megagametogenesis. This is Kinesin-like protein KIN-7A from Arabidopsis thaliana (Mouse-ear cress).